Here is an 88-residue protein sequence, read N- to C-terminus: Co-chaperonin GroES (88 aa).

The protein belongs to the GroES chaperonin family. Heptamer of 7 subunits arranged in a ring. Interacts with the chaperonin GroEL.

It is found in the cytoplasm. Its function is as follows. Together with the chaperonin GroEL, plays an essential role in assisting protein folding. The GroEL-GroES system forms a nano-cage that allows encapsulation of the non-native substrate proteins and provides a physical environment optimized to promote and accelerate protein folding. GroES binds to the apical surface of the GroEL ring, thereby capping the opening of the GroEL channel. The chain is Co-chaperonin GroES from Treponema denticola (strain ATCC 35405 / DSM 14222 / CIP 103919 / JCM 8153 / KCTC 15104).